The primary structure comprises 68 residues: uncharacterized protein (68 aa).

Positions 1-28 (MNKEQSADDPSVDLIRVKNMLNSTISMS) are cleaved as a signal peptide.

This is an uncharacterized protein from Escherichia coli (strain K12).